A 343-amino-acid chain; its full sequence is Small ribosomal subunit biogenesis GTPase RsgA (343 aa).

In terms of domain architecture, CP-type G spans 116–275 (RGQLKPVAAN…LIDSPGIREF (160 aa)). GTP contacts are provided by residues 163-166 (NKAD) and 217-225 (GQSGVGKSS). Residues cysteine 299, cysteine 304, histidine 306, and cysteine 312 each coordinate Zn(2+).

This sequence belongs to the TRAFAC class YlqF/YawG GTPase family. RsgA subfamily. Monomer. Associates with 30S ribosomal subunit, binds 16S rRNA. Zn(2+) serves as cofactor.

It is found in the cytoplasm. Its function is as follows. One of several proteins that assist in the late maturation steps of the functional core of the 30S ribosomal subunit. Helps release RbfA from mature subunits. May play a role in the assembly of ribosomal proteins into the subunit. Circularly permuted GTPase that catalyzes slow GTP hydrolysis, GTPase activity is stimulated by the 30S ribosomal subunit. This is Small ribosomal subunit biogenesis GTPase RsgA from Ectopseudomonas mendocina (strain ymp) (Pseudomonas mendocina).